A 152-amino-acid chain; its full sequence is Large ribosomal subunit protein bL9 (152 aa).

This sequence belongs to the bacterial ribosomal protein bL9 family.

In terms of biological role, binds to the 23S rRNA. The polypeptide is Large ribosomal subunit protein bL9 (Prochlorococcus marinus (strain MIT 9211)).